Consider the following 88-residue polypeptide: Small ribosomal subunit protein uS15c (88 aa).

This sequence belongs to the universal ribosomal protein uS15 family. In terms of assembly, part of the 30S ribosomal subunit.

It localises to the plastid. The protein resides in the chloroplast. This is Small ribosomal subunit protein uS15c (rps15) from Lepidium virginicum (Virginia pepperweed).